Here is a 347-residue protein sequence, read N- to C-terminus: LRP2-binding protein (347 aa).

Residues 59–92 (TLAYFLRGQLYFEEGWYEEALEQFEEIKEKDHQA) form a TPR repeat. 6 Sel1-like repeats span residues 93–125 (TYQLGVMYYDGLGTTLDAEKGVDYMKKILDSPC), 133–168 (FAAAYNLGRAYYEGKGVKRSNEEAERLWLIAADNGN), 173–206 (VKAQSMLGLYYSTKEPKELEKAFYWHSEACGNGN), 207–242 (LESQGALGLMYLYGQGIRQDTEAALQCLREAAERGN), 243–277 (VYAQGNLVEYYYKMKFFTKCVAFSKRIADYDEVHD), and 297–332 (AMASFYHARCLQLGLGITRDETTAKHYYSKACRLNP).

In terms of assembly, interacts with LRP2.

Its subcellular location is the cytoplasm. In terms of biological role, may act as an adapter that regulates LRP2 function. The protein is LRP2-binding protein (LRP2BP) of Homo sapiens (Human).